The primary structure comprises 100 residues: Small ribosomal subunit protein uS14 (100 aa).

Belongs to the universal ribosomal protein uS14 family. In terms of assembly, part of the 30S ribosomal subunit. Contacts proteins S3 and S10.

In terms of biological role, binds 16S rRNA, required for the assembly of 30S particles and may also be responsible for determining the conformation of the 16S rRNA at the A site. This Parasynechococcus marenigrum (strain WH8102) protein is Small ribosomal subunit protein uS14.